We begin with the raw amino-acid sequence, 149 residues long: UPF0178 protein SE_0451 (149 aa).

It belongs to the UPF0178 family.

In Staphylococcus epidermidis (strain ATCC 12228 / FDA PCI 1200), this protein is UPF0178 protein SE_0451.